The following is a 643-amino-acid chain: COP9 signalosome complex subunit 10 (643 aa).

Over residues 1–33 (MTDESDNYNDFMMSDEDMDSIEMEDEENDVEGD) the composition is skewed to acidic residues. The tract at residues 1 to 37 (MTDESDNYNDFMMSDEDMDSIEMEDEENDVEGDEGQR) is disordered. In terms of domain architecture, PCI spans 331-517 (CKEEFWECLK…DTVTFYSEQH (187 aa)). Positions 573-584 (DSQSHSKSNTKS) are enriched in polar residues. A disordered region spans residues 573-594 (DSQSHSKSNTKSMSRHVSGHDP).

Component of a COP9 signalosome-like (CSN) complex.

Its subcellular location is the cytoplasm. It is found in the nucleus. Functionally, component of the COP9 signalosome (CSN) complex that acts as an regulator of the ubiquitin (Ubl) conjugation pathway by mediating the deneddylation of the cullin subunit of SCF-type E3 ubiquitin-protein ligase complexes. The CSN complex is involved in the regulation of the mating pheromone response. The chain is COP9 signalosome complex subunit 10 (RRI2) from Candida glabrata (strain ATCC 2001 / BCRC 20586 / JCM 3761 / NBRC 0622 / NRRL Y-65 / CBS 138) (Yeast).